A 108-amino-acid chain; its full sequence is UPF0060 membrane protein YnfA (108 aa).

Residues 1–5 lie on the Periplasmic side of the membrane; sequence MLKTT. The helical transmembrane segment at 6-26 threads the bilayer; the sequence is LLFFVTALCEIIGCFLPWLWL. At 27 to 30 the chain is on the cytoplasmic side; sequence KRGA. A helical membrane pass occupies residues 31 to 51; sequence SVWWLLPAAASLALFVWLLTL. The Periplasmic segment spans residues 52–60; the sequence is HPAASGRVY. Residues 61-81 traverse the membrane as a helical segment; sequence AAYGGVYVCTALLWLRVVDGV. Residues 82 to 84 are Cytoplasmic-facing; it reads RLT. A helical transmembrane segment spans residues 85 to 105; it reads VYDWCGALIALCGMLIIVVGW. At 106–108 the chain is on the periplasmic side; sequence GRT.

It belongs to the UPF0060 family.

The protein localises to the cell inner membrane. This chain is UPF0060 membrane protein YnfA, found in Salmonella agona (strain SL483).